A 471-amino-acid polypeptide reads, in one-letter code: MTVVTTMPRDAAGTALLPERPRGPIMTDLIELLRLAGPVVLSRLGIMVMGLTDAIVVGHFSAQQLGYHAMAWAPSSVFVTATVGLLVGVQVMTARAMGAGNPHETGAVLRRGLVYAGWLGFGSMALLALFGPMFLQAMGLKDGLAEGATLPLIVFSLSLPVYAISVVLTFWLEGLSRPGPGAAMMWLANVVNLGANLLLVPGVLGPPALGAVGGAWATFIARTALALALAIFVIRMKEARELGVFDKPARDRPAEIEQRRIGYGAGASNFFEVSAFAGMNLICGWISAVAVAAYTVVLNVSAIIFMVPLGVASATAVMVGRAYGARDPAGMTRAGWIAFAVIGVIGVLFGLLLYPTKHWVALAYTTDPAALALILPALVLACLFFAPDAVQVVAAQALRARGEVWVPTITHLISYALVMGPLAWWLAIPKGMGLNGVLVSIIVTSFLAAGFLLMRFRMLDWRDRKAAQEAA.

The next 11 membrane-spanning stretches (helical) occupy residues 38-58 (PVVL…IVVG), 69-89 (AMAW…LVGV), 114-134 (VYAG…GPMF), 152-172 (LIVF…TFWL), 197-217 (LLLV…GAWA), 266-286 (GASN…CGWI), 289-309 (VAVA…MVPL), 334-354 (AGWI…LLLY), 370-390 (ALAL…PDAV), 409-429 (ITHL…LAIP), and 434-454 (LNGV…FLLM).

It belongs to the multi antimicrobial extrusion (MATE) (TC 2.A.66.1) family.

It localises to the cell inner membrane. Its function is as follows. Multidrug efflux pump. In Caulobacter vibrioides (strain ATCC 19089 / CIP 103742 / CB 15) (Caulobacter crescentus), this protein is Probable multidrug resistance protein NorM (norM).